The following is a 494-amino-acid chain: Transcription factor SOX-9 (494 aa).

Disordered regions lie at residues 1–66 and 159–275; these read MNLL…ESDE and ERLR…FRDV. The span at 27–42 shows a compositional bias: low complexity; the sequence is SDDSAGSPCPSGSGSD. Composition is skewed to basic and acidic residues over residues 56 to 66 and 159 to 174; these read GDPDLKKESDE and ERLR…DYKY. Residues 63–103 are dimerization (DIM); that stretch reads ESDEDKFPVCIREAVSQVLKGYDWTLVPMPVRVNGSSKNKP. The PQA stretch occupies residues 63-103; that stretch reads ESDEDKFPVCIREAVSQVLKGYDWTLVPMPVRVNGSSKNKP. Ser-64 is modified (phosphoserine). Residues 105 to 173 constitute a DNA-binding region (HMG box); the sequence is VKRPMNAFMV…QHKKDHPDYK (69 aa). Ser-181 carries the post-translational modification Phosphoserine. Positions 211 to 222 are enriched in low complexity; it reads SPQSSSSISEVH. The segment at 224-309 is transactivation domain (TAM); the sequence is PGEHSGQSQG…LPPNGHPGVP (86 aa). 2 short sequence motifs (9aaTAD) span residues 277–286 and 292–300; these read IGELSSDVIS and DVNEFDQYL. Residues 326 to 337 show a composition bias toward low complexity; sequence SSASSPAGAGHA. Residues 326–402 are disordered; that stretch reads SSASSPAGAG…PQQQQQQQQQ (77 aa). A compositionally biased stretch (pro residues) spans 344 to 353; the sequence is PQPPQPPAQP. The tract at residues 372-494 is transactivation domain (TAC); the sequence is RPHIKTEQLS…QPVYTQLTRP (123 aa). Lys-376 participates in a covalent cross-link: Glycyl lysine isopeptide (Lys-Gly) (interchain with G-Cter in SUMO). Over residues 378–387 the composition is skewed to polar residues; that stretch reads EQLSPSHYSE. Residues 388–402 show a composition bias toward low complexity; sequence QQQHSPQQQQQQQQQ. The 9aaTAD 3 signature appears at 445-453; sequence GGLYSTFTY. Positions 462–494 are disordered; that stretch reads YTPIADTSGVPSIPQTHSPQHWEQPVYTQLTRP. Residues 470–494 show a composition bias toward polar residues; it reads GVPSIPQTHSPQHWEQPVYTQLTRP.

In terms of assembly, interacts with SNAI2; triggers neural crest delamination in a phosphorylation dependent manner. Interacts with UBE2I. Phosphorylated at Ser-181 in the developing neural tube. Phosphorylation at either Ser-64 or Ser-181 is required for sumoylation, but phosphorylation is not dependent on sumoylation. Sumoylation is enhanced by PKA. Phosphorylation is required for interaction with SNAI2 to trigger neural crest delamination and for an efficient trunk neural crest delamination, whereas sumoylation plays a less significant role. Phosphorylation and sumoylation are induced by BMP signaling pathway. Post-translationally, sumoylated at Lys-376; phosphorylation at either Ser-64 or Ser-181 is required for sumoylation. Sumoylation is induced by BMP signaling pathway.

Its subcellular location is the nucleus. In terms of biological role, transcription factor that plays a key role in chondrocytes differentiation and skeletal development. Specifically binds the 5'-ACAAAG-3' DNA motif present in enhancers and super-enhancers and promotes expression of genes important for chondrogenesis, including COL2A1. Plays a central role in successive steps of chondrocyte differentiation. Absolutely required for precartilaginous condensation, the first step in chondrogenesis during which skeletal progenitors differentiate into prechondrocytes. Together with SOX5 and SOX6, required for overt chondrogenesis when condensed prechondrocytes differentiate into early stage chondrocytes, the second step in chondrogenesis. Later, required to direct hypertrophic maturation and block osteoblast differentiation of growth plate chondrocytes: maintains chondrocyte columnar proliferation, delays prehypertrophy and then prevents osteoblastic differentiation of chondrocytes. Also required for chondrocyte hypertrophy, both indirectly, by keeping the lineage fate of chondrocytes, and directly, by remaining present in upper hypertrophic cells. Low lipid levels are the main nutritional determinant for chondrogenic commitment of skeletal progenitor cells: when lipids levels are low, FOXO transcription factors promote expression of SOX9, which induces chondrogenic commitment and suppresses fatty acid oxidation. In addition to cartilage development, also acts as a regulator of proliferation and differentiation in epithelial stem/progenitor cells. In response to bone morphogenetic protein stimulus, phosphorylation is induced and then sumoylation, allowing cooperation with SNAI2 to trigger neural crest delamination. This chain is Transcription factor SOX-9, found in Gallus gallus (Chicken).